A 327-amino-acid polypeptide reads, in one-letter code: Gonadotropin-releasing hormone receptor (327 aa).

The Extracellular portion of the chain corresponds to 1–38 (MANNASLEQDPNHCSAINNSIPLIQGKLPTLTVSGKIR). Residues Asn4 and Asn18 are each glycosylated (N-linked (GlcNAc...) asparagine). A helical transmembrane segment spans residues 39 to 58 (VTVTFFLFLLSTAFNASFLL). At 59–77 (KLQKWTQKRKKGKKLSRMK) the chain is on the cytoplasmic side. The helical transmembrane segment at 78-97 (VLLKHLTLANLLETLIVMPL) threads the bilayer. At 98 to 115 (DGMWNITVQWYAGEFLCK) the chain is on the extracellular side. The N-linked (GlcNAc...) asparagine glycan is linked to Asn102. Cys114 and Cys195 are joined by a disulfide. Residues 116–137 (VLSYLKLFSMYAPAFMMVVISL) form a helical membrane-spanning segment. Over 138-164 (DRSLAITQPLAVQSNSKLEQSMISLAW) the chain is Cytoplasmic. A helical membrane pass occupies residues 165–184 (ILSIVFAGPQLYIFRMIYLA). The Extracellular portion of the chain corresponds to 185–211 (DGSGPTVFSQCVTHCSFPQWWHQAFYN). A helical membrane pass occupies residues 212–231 (FFTFGCLFIIPLLIMLICNA). The Cytoplasmic segment spans residues 232 to 280 (KIIFALTRVLHQDPRKLQLNQSKNNIPRARLRTLKMTVAFATSFVVCWT). A helical transmembrane segment spans residues 281-299 (PYYVLGIWYWFDPEMLNRV). Over 300-305 (SEPVNH) the chain is Extracellular. The helical transmembrane segment at 306-325 (FFFLFAFLNPCFDPLIYGYF) threads the bilayer. The Cytoplasmic segment spans residues 326-327 (SL).

It belongs to the G-protein coupled receptor 1 family. In terms of tissue distribution, pituitary gland.

Its subcellular location is the cell membrane. In terms of biological role, receptor for gonadotropin releasing hormone (GnRH) that mediates the action of GnRH to stimulate the secretion of the gonadotropic hormones luteinizing hormone (LH) and follicle-stimulating hormone (FSH). This receptor mediates its action by association with G-proteins that activate a phosphatidylinositol-calcium second messenger system. The sequence is that of Gonadotropin-releasing hormone receptor (Gnrhr) from Mus musculus (Mouse).